The chain runs to 166 residues: Regulatory protein RecX (166 aa).

It belongs to the RecX family.

Its subcellular location is the cytoplasm. Its function is as follows. Modulates RecA activity. This is Regulatory protein RecX from Shigella boydii serotype 18 (strain CDC 3083-94 / BS512).